The chain runs to 71 residues: uncharacterized protein (71 aa).

Positions 23–71 (ENEKAGQSEEYDDDDKEENKKRRRNNGRRGPPEKKKSRRGGEEQTQRII) are disordered. Basic and acidic residues predominate over residues 52 to 71 (GPPEKKKSRRGGEEQTQRII).

This is an uncharacterized protein from Caenorhabditis elegans.